Here is a 309-residue protein sequence, read N- to C-terminus: RuBisCO operon transcriptional regulator (309 aa).

One can recognise an HTH lysR-type domain in the interval 6–63 (ATLHQLKIFAAVARHMSFARAAEELHLTPPALSIQVRQLAEAVGQPLFDQIGKKIYLT). A DNA-binding region (H-T-H motif) is located at residues 23 to 42 (FARAAEELHLTPPALSIQVR).

This sequence belongs to the LysR transcriptional regulatory family.

Its function is as follows. Trans-acting transcriptional regulator of RuBisCO genes (rbcL1S1) expression. The sequence is that of RuBisCO operon transcriptional regulator (rbcR) from Acidithiobacillus ferrooxidans (Thiobacillus ferrooxidans).